Reading from the N-terminus, the 452-residue chain is Maltoporin (452 aa).

An N-terminal signal peptide occupies residues 1 to 25 (MMITLRKLPLAVAVAAGVMSAQAMA).

Belongs to the porin LamB (TC 1.B.3) family. In terms of assembly, homotrimer formed of three 18-stranded antiparallel beta-barrels, containing three independent channels.

It is found in the cell outer membrane. It carries out the reaction beta-maltose(in) = beta-maltose(out). In terms of biological role, involved in the transport of maltose and maltodextrins. The polypeptide is Maltoporin (Salmonella agona (strain SL483)).